We begin with the raw amino-acid sequence, 685 residues long: Nucleolar protein 4 (685 aa).

The segment at 1–21 is disordered; that stretch reads MEETIENVEVPSSNVSKQNDD. Positions 26-103 constitute an RRM 1 domain; that stretch reads KTLFVRSIPQ…HILRVDIAKR (78 aa). Over residues 106–123 the composition is skewed to basic and acidic residues; sequence RSKKTSEVVEKSTPESSE. The interval 106 to 142 is disordered; the sequence is RSKKTSEVVEKSTPESSEKITGQNNEDEDDADGEDSM. A compositionally biased stretch (acidic residues) spans 130-140; that stretch reads NEDEDDADGED. Positions 147-225 constitute an RRM 2 domain; the sequence is PKLIIRNMPW…RKVAVDFAVQ (79 aa). Basic and acidic residues predominate over residues 231 to 242; sequence DYKKAQPEMNDK. Residues 231–285 are disordered; that stretch reads DYKKAQPEMNDKDDNESGNEDAEENHDDEEDENEEEDRQVDQASKNKESKRKAQN. Over residues 243 to 268 the composition is skewed to acidic residues; the sequence is DDNESGNEDAEENHDDEEDENEEEDR. Ser247 is subject to Phosphoserine. RRM domains lie at 290-383 and 462-612; these read FSVF…PTLV and TRLA…FAIE. Thr379 bears the Phosphothreonine mark. Positions 622 to 631 are enriched in basic residues; it reads EQLKQARTKR. The interval 622 to 685 is disordered; the sequence is EQLKQARTKR…FKRKRKHAKK (64 aa). A compositionally biased stretch (basic and acidic residues) spans 645 to 672; the sequence is SENKKPKKEEATTPTNPDDKKMGDDIKR. The span at 674–685 shows a compositional bias: basic residues; it reads IGFKRKRKHAKK.

As to quaternary structure, interacts with NOP1.

It is found in the nucleus. The protein localises to the nucleolus. Functionally, required for 60S ribosomal subunit synthesis. Probably involved in the processing of 27S rRNA to produce mature 25S rRNA. This chain is Nucleolar protein 4 (NOP4), found in Saccharomyces cerevisiae (strain ATCC 204508 / S288c) (Baker's yeast).